Here is a 166-residue protein sequence, read N- to C-terminus: Pyruvoyl-dependent arginine decarboxylase (166 aa).

Serine 45 bears the Pyruvic acid (Ser) mark.

The protein belongs to the PdaD family. The cofactor is pyruvate.

The catalysed reaction is L-arginine + H(+) = agmatine + CO2. This is Pyruvoyl-dependent arginine decarboxylase from Methanocella arvoryzae (strain DSM 22066 / NBRC 105507 / MRE50).